Here is a 368-residue protein sequence, read N- to C-terminus: uncharacterized protein (368 aa).

It belongs to the YCR102c/YLR460c/YNL134c family.

This is an uncharacterized protein from Saccharomyces cerevisiae (strain ATCC 204508 / S288c) (Baker's yeast).